A 248-amino-acid chain; its full sequence is Probable pyridoxal 5'-phosphate synthase subunit pdx2 (248 aa).

Residue 70–72 (GES) participates in L-glutamine binding. The active-site Nucleophile is the C106. Residues R136 and 174–175 (IR) each bind L-glutamine. Catalysis depends on charge relay system residues H221 and E223.

It belongs to the glutaminase PdxT/SNO family.

The catalysed reaction is aldehydo-D-ribose 5-phosphate + D-glyceraldehyde 3-phosphate + L-glutamine = pyridoxal 5'-phosphate + L-glutamate + phosphate + 3 H2O + H(+). It carries out the reaction L-glutamine + H2O = L-glutamate + NH4(+). The protein operates within cofactor biosynthesis; pyridoxal 5'-phosphate biosynthesis. Catalyzes the hydrolysis of glutamine to glutamate and ammonia as part of the biosynthesis of pyridoxal 5'-phosphate. The resulting ammonia molecule is channeled to the active site of pdx1. The sequence is that of Probable pyridoxal 5'-phosphate synthase subunit pdx2 from Dictyostelium discoideum (Social amoeba).